A 379-amino-acid chain; its full sequence is Protein PatA (379 aa).

A disordered region spans residues 181–226 (RREASSQEISSSTEHNQIPVNNRRSTKFTSPPHTQPKPEPRLPQIN). Positions 186-212 (SQEISSSTEHNQIPVNNRRSTKFTSPP) are enriched in polar residues. Residues 262 to 378 (TIFCIDENPI…DLLKVIFKHI (117 aa)) form the Response regulatory domain. Asp-313 bears the 4-aspartylphosphate mark.

The protein localises to the cell septum. Controls heterocyst pattern formation. Required for the differentiation of intercalary heterocysts but not for terminal heterocysts. The polypeptide is Protein PatA (patA) (Nostoc sp. (strain PCC 7120 / SAG 25.82 / UTEX 2576)).